The primary structure comprises 81 residues: Small ribosomal subunit protein bS16 (81 aa).

This sequence belongs to the bacterial ribosomal protein bS16 family.

In Neisseria gonorrhoeae (strain ATCC 700825 / FA 1090), this protein is Small ribosomal subunit protein bS16.